The following is a 259-amino-acid chain: uncharacterized protein (259 aa).

3 disordered regions span residues glycine 22–glycine 68, arginine 111–glutamate 133, and leucine 181–glutamine 202. The span at asparagine 50–glutamate 63 shows a compositional bias: acidic residues. Serine 127 carries the phosphoserine modification.

This is an uncharacterized protein from Schizosaccharomyces pombe (strain 972 / ATCC 24843) (Fission yeast).